The chain runs to 431 residues: Keratin, type I cytoskeletal 20 (431 aa).

A disordered region spans residues 1-23 (MDFSRQSFHRSLSSSSQGPALSM). The segment at 1-76 (MDFSRQSFHR…SNGSDLFGGN (76 aa)) is head. Serine 13 is modified (phosphoserine; by MAPKAPK2, MAPKAPK3 and PKC). 2 positions are modified to phosphoserine: serine 16 and serine 26. The coil 1A stretch occupies residues 77–112 (GKLAMQNLNDRLANYLEKVRSLEQSNSRLEAQIKQW). Residues 77–388 (GKLAMQNLND…RLLEGEDIKT (312 aa)) enclose the IF rod domain. A linker 1 region spans residues 113–130 (YETNAPSTIRDYSSYYAQ). The coil 1B stretch occupies residues 131–222 (IKELQNQVKD…KEHQEEVEVL (92 aa)). Residues 223–245 (RRQLGNNVNVEVDAAPGLNLGEI) form a linker 12 region. A coil 2 region spans residues 246–384 (MNEMRQRYEV…ATYRRLLEGE (139 aa)). The tail stretch occupies residues 385–431 (DIKTTEYQLSTLEMKDIKKTRKIKTVVEEVVDGKVVSSEVKEIEESV).

This sequence belongs to the intermediate filament family. In terms of assembly, heterotetramer of two type I and two type II keratins. Associates with KRT8. Hyperphosphorylation at Ser-13 occurs during the early stages of apoptosis but becomes less prominent during the later stages. Phosphorylation at Ser-13 also increases in response to stress brought on by cell injury. In terms of processing, proteolytically cleaved by caspases during apoptosis. Cleavage occurs at Asp-235. As to expression, expressed at low levels in the more differentiated suprabasal regions of the small intestine, and at higher levels in the colon, mainly in the upper region and in scattered cells throughout the remaining epithelium. Also expressed in epithelial cells of bladder, ileum and stomach and at lower levels in pancreas and earskin. The phosphorylated form is nearly exclusively expressed in goblet cells of the small intestine and in the lumen-proximal cells of the colon (at protein level). Also expressed in jejunum and duodenum.

Its function is as follows. Plays a significant role in maintaining keratin filament organization in intestinal epithelia. When phosphorylated, plays a role in the secretion of mucin in the small intestine. In Mus musculus (Mouse), this protein is Keratin, type I cytoskeletal 20.